Reading from the N-terminus, the 137-residue chain is Large ribosomal subunit protein uL16 (137 aa).

Positions 1–13 (MLQPSRRKYRKEQ) are enriched in basic residues. The interval 1 to 22 (MLQPSRRKYRKEQKGRNTGLAT) is disordered.

The protein belongs to the universal ribosomal protein uL16 family. Part of the 50S ribosomal subunit.

Functionally, binds 23S rRNA and is also seen to make contacts with the A and possibly P site tRNAs. The chain is Large ribosomal subunit protein uL16 from Azoarcus sp. (strain BH72).